We begin with the raw amino-acid sequence, 423 residues long: Endochitinase 42 (423 aa).

A signal peptide spans 1 to 22 (MLSFLGKSVALLAALQATLSSP). Residues 23-34 (KPGHRRASVEKR) constitute a propeptide that is removed on maturation. In terms of domain architecture, GH18 spans 38–401 (YANSVYFTNW…GTSHRALGGL (364 aa)). Residues 102–103 (GT) and 129–132 (GGWT) each bind chitin. E171 acts as the Proton donor in catalysis. Residue Y172 coordinates chitin. N218 carries an N-linked (GlcNAc...) asparagine glycan. Chitin-binding positions include 237 to 240 (MAYD) and W378.

It belongs to the glycosyl hydrolase 18 family. Chitinase class V subfamily.

It localises to the secreted. It catalyses the reaction Random endo-hydrolysis of N-acetyl-beta-D-glucosaminide (1-&gt;4)-beta-linkages in chitin and chitodextrins.. Secreted chitinase involved in the degradation of chitin, a component of the cell walls of fungi and exoskeletal elements of some animals (including worms and arthropods). Plays a morphogenetic role during apical growth, cell division and differentiation (cell wall morphogenesis). Also acts as an antifungal agent. Involved in the degradation and further assimilation of phytopathogenic fungi, namely mycoparasitism, the major mechanism accounting for the antagonistic activity against phytopathogenic fungi displayed by Trichoderma. In Trichoderma harzianum (Hypocrea lixii), this protein is Endochitinase 42 (chit42).